Consider the following 96-residue polypeptide: Large ribosomal subunit protein uL23 (96 aa).

This sequence belongs to the universal ribosomal protein uL23 family. Part of the 50S ribosomal subunit. Contacts protein L29, and trigger factor when it is bound to the ribosome.

Functionally, one of the early assembly proteins it binds 23S rRNA. One of the proteins that surrounds the polypeptide exit tunnel on the outside of the ribosome. Forms the main docking site for trigger factor binding to the ribosome. The protein is Large ribosomal subunit protein uL23 of Nitratidesulfovibrio vulgaris (strain ATCC 29579 / DSM 644 / CCUG 34227 / NCIMB 8303 / VKM B-1760 / Hildenborough) (Desulfovibrio vulgaris).